Reading from the N-terminus, the 636-residue chain is 1-deoxy-D-xylulose-5-phosphate synthase (636 aa).

Thiamine diphosphate contacts are provided by residues histidine 72 and 113–115 (GHA). Residue aspartate 144 participates in Mg(2+) binding. Thiamine diphosphate-binding positions include 145–146 (GS), asparagine 174, tyrosine 287, and glutamate 370. Asparagine 174 contacts Mg(2+).

It belongs to the transketolase family. DXPS subfamily. Homodimer. Requires Mg(2+) as cofactor. Thiamine diphosphate serves as cofactor.

It carries out the reaction D-glyceraldehyde 3-phosphate + pyruvate + H(+) = 1-deoxy-D-xylulose 5-phosphate + CO2. It participates in metabolic intermediate biosynthesis; 1-deoxy-D-xylulose 5-phosphate biosynthesis; 1-deoxy-D-xylulose 5-phosphate from D-glyceraldehyde 3-phosphate and pyruvate: step 1/1. Functionally, catalyzes the acyloin condensation reaction between C atoms 2 and 3 of pyruvate and glyceraldehyde 3-phosphate to yield 1-deoxy-D-xylulose-5-phosphate (DXP). In Synechococcus elongatus (strain ATCC 33912 / PCC 7942 / FACHB-805) (Anacystis nidulans R2), this protein is 1-deoxy-D-xylulose-5-phosphate synthase.